The following is a 507-amino-acid chain: GMP synthase [glutamine-hydrolyzing] (507 aa).

The region spanning 9–202 (TILIIDFGSQ…VHRIVGVKPG (194 aa)) is the Glutamine amidotransferase type-1 domain. The active-site Nucleophile is Cys86. Active-site residues include His176 and Glu178. Residues 203 to 395 (WTMGAYREQA…LGLPDSFIGR (193 aa)) enclose the GMPS ATP-PPase domain. Residue 230 to 236 (SGGVDSS) coordinates ATP.

As to quaternary structure, homodimer.

It carries out the reaction XMP + L-glutamine + ATP + H2O = GMP + L-glutamate + AMP + diphosphate + 2 H(+). Its pathway is purine metabolism; GMP biosynthesis; GMP from XMP (L-Gln route): step 1/1. Functionally, catalyzes the synthesis of GMP from XMP. The sequence is that of GMP synthase [glutamine-hydrolyzing] from Brucella melitensis biotype 1 (strain ATCC 23456 / CCUG 17765 / NCTC 10094 / 16M).